The following is a 444-amino-acid chain: ATP-dependent protease ATPase subunit HslU (444 aa).

ATP-binding positions include Ile20 and 62–67; that span reads GVGKTE. The segment at 137 to 162 is disordered; that stretch reads LVPPSRGTSGEPERGEDSNARQTFRK. Asp257, Glu322, and Arg394 together coordinate ATP.

Belongs to the ClpX chaperone family. HslU subfamily. In terms of assembly, a double ring-shaped homohexamer of HslV is capped on each side by a ring-shaped HslU homohexamer. The assembly of the HslU/HslV complex is dependent on binding of ATP.

Its subcellular location is the cytoplasm. Its function is as follows. ATPase subunit of a proteasome-like degradation complex; this subunit has chaperone activity. The binding of ATP and its subsequent hydrolysis by HslU are essential for unfolding of protein substrates subsequently hydrolyzed by HslV. HslU recognizes the N-terminal part of its protein substrates and unfolds these before they are guided to HslV for hydrolysis. The chain is ATP-dependent protease ATPase subunit HslU from Bordetella petrii (strain ATCC BAA-461 / DSM 12804 / CCUG 43448).